Consider the following 1145-residue polypeptide: DNA mismatch repair protein msh-3 (1145 aa).

Disordered stretches follow at residues 1-183 (MAGP…GAKT) and 857-879 (SSSA…LAQL). Residues 13–33 (ASISSFFTPRNTSPLVNLSQN) are compositionally biased toward polar residues. The segment covering 121-131 (AERKKKEELHR) has biased composition (basic and acidic residues). The span at 158-169 (GEGEEGEDDEEE) shows a compositional bias: acidic residues. Residues 183 to 307 (TGKLTPMELQ…RKLTNVYTKG (125 aa)) are mispair-binding domain. 882-889 (GPNMGGKS) is an ATP binding site. The segment at 1030-1056 (KSRTSMDDDAMEVDGDGDGQEGAGADK) is disordered. Residues 1036–1048 (DDDAMEVDGDGDG) are compositionally biased toward acidic residues.

This sequence belongs to the DNA mismatch repair MutS family. MSH3 subfamily. In terms of assembly, heterodimer consisting of msh-2-msh-3 (MutS beta). Forms a ternary complex with MutL alpha (mlh-1-pms-1).

It localises to the nucleus. Functionally, component of the post-replicative DNA mismatch repair system (MMR). Heterodimerizes with msh-2 to form MutS beta, which binds to DNA mismatches thereby initiating DNA repair. Msh-3 provides substrate-binding and substrate specificity to the complex. When bound, the MutS beta heterodimer bends the DNA helix and shields approximately 20 base pairs. Acts mainly to repair insertion-deletion loops (IDLs) from 2 to 13 nucleotides in size, but can also repair base-base and single insertion-deletion mismatches that occur during replication. After mismatch binding, forms a ternary complex with the MutL alpha heterodimer, which is thought to be responsible for directing the downstream MMR events, including strand discrimination, excision, and resynthesis. ATP binding and hydrolysis play a pivotal role in mismatch repair functions. In Neurospora crassa (strain ATCC 24698 / 74-OR23-1A / CBS 708.71 / DSM 1257 / FGSC 987), this protein is DNA mismatch repair protein msh-3 (msh-3).